Reading from the N-terminus, the 530-residue chain is MIQRINALSLSSGLNWFVTSLKIHGNNLKTLKQSHCYMIITGLNRDNLNVAKFIEACSNAGHLRYAYSVFTHQPCPNTYLHNTMIRALSLLDEPNAHSIAITVYRKLWALCAKPDTFTFPFVLKIAVRVSDVWFGRQIHGQVVVFGFDSSVHVVTGLIQMYFSCGGLGDARKMFDEMLVKDVNVWNALLAGYGKVGEMDEARSLLEMMPCWVRNEVSWTCVISGYAKSGRASEAIEVFQRMLMENVEPDEVTLLAVLSACADLGSLELGERICSYVDHRGMNRAVSLNNAVIDMYAKSGNITKALDVFECVNERNVVTWTTIIAGLATHGHGAEALAMFNRMVKAGVRPNDVTFIAILSACSHVGWVDLGKRLFNSMRSKYGIHPNIEHYGCMIDLLGRAGKLREADEVIKSMPFKANAAIWGSLLAASNVHHDLELGERALSELIKLEPNNSGNYMLLANLYSNLGRWDESRMMRNMMKGIGVKKMAGESSIEVENRVYKFISGDLTHPQVERIHEILQEMDLQIQSKV.

PPR repeat units follow at residues 77–114 (NTYL…CAKP), 115–149 (DTFT…GFDS), 150–180 (SVHV…MLVK), 181–211 (DVNV…MPCW), 214–248 (NEVS…NVEP), 249–283 (DEVT…GMNR), 284–314 (AVSL…VNER), 315–349 (NVVT…GVRP), 350–380 (NDVT…MRSK), and 386–420 (NIEH…ANAA). The interval 421 to 496 (IWGSLLAASN…MAGESSIEVE (76 aa)) is type E motif. The segment at 497–527 (NRVYKFISGDLTHPQVERIHEILQEMDLQIQ) is type E(+) motif.

Belongs to the PPR family. PCMP-E subfamily.

The protein is Pentatricopeptide repeat-containing protein At5g56310 (PCMP-E13) of Arabidopsis thaliana (Mouse-ear cress).